Here is a 261-residue protein sequence, read N- to C-terminus: Thiazole synthase (261 aa).

Lys102 (schiff-base intermediate with DXP) is an active-site residue. 1-deoxy-D-xylulose 5-phosphate contacts are provided by residues Gly163, 189–190 (AG), and 211–212 (NT).

The protein belongs to the ThiG family. In terms of assembly, homotetramer. Forms heterodimers with either ThiH or ThiS.

The protein localises to the cytoplasm. It carries out the reaction [ThiS sulfur-carrier protein]-C-terminal-Gly-aminoethanethioate + 2-iminoacetate + 1-deoxy-D-xylulose 5-phosphate = [ThiS sulfur-carrier protein]-C-terminal Gly-Gly + 2-[(2R,5Z)-2-carboxy-4-methylthiazol-5(2H)-ylidene]ethyl phosphate + 2 H2O + H(+). It participates in cofactor biosynthesis; thiamine diphosphate biosynthesis. Functionally, catalyzes the rearrangement of 1-deoxy-D-xylulose 5-phosphate (DXP) to produce the thiazole phosphate moiety of thiamine. Sulfur is provided by the thiocarboxylate moiety of the carrier protein ThiS. In vitro, sulfur can be provided by H(2)S. This Acinetobacter baumannii (strain AB307-0294) protein is Thiazole synthase.